The sequence spans 49 residues: Delta-actitoxin-Axm1a (49 aa).

3 disulfide bridges follow: Cys-4-Cys-46, Cys-6-Cys-36, and Cys-29-Cys-47.

The protein belongs to the sea anemone sodium channel inhibitory toxin family. Type I subfamily.

The protein resides in the secreted. It localises to the nematocyst. In terms of biological role, binds specifically to voltage-gated sodium channels (Nav) (site 3), thereby delaying their inactivation. This toxin retains the greatest capacity to discriminate between the cardiac (Nav1.5/SCN5A) and neuronal sodium channels (2.5 nM versus 120 nM, when electrophysiologically tested and 14 nM versus 400 nM, when tested by ion flux), whereas its paralog Anthopleurin-B has the highest affinity of all anemone toxins for the mammalian sodium channel. Its ability to differentiate between cardiac and skeletal channels appears to be associated with domain 4 of the channel. This toxin does not slow or inhibit closed-state inactivation of cardiac sodium channels, but selectively modifies inactivation from the open-state. It does not display phospholipid-binding activities, suggesting that the domain IV S3-S4 linker is located at the extracellular surface and not buried in the phospholipid bilayer. This chain is Delta-actitoxin-Axm1a, found in Anthopleura xanthogrammica (Giant green sea anemone).